The primary structure comprises 361 residues: Sensor protein VanSC (361 aa).

The next 2 helical transmembrane spans lie at 16-36 and 59-79; these read FVTT…IRFI and WLFC…IYYM. The Histidine kinase domain maps to 144–359; it reads YLAHDLRTPL…IFNVRLPKPA (216 aa). His-147 carries the post-translational modification Phosphohistidine; by autocatalysis. Position 252 (Glu-252) interacts with Mg(2+).

In terms of processing, autophosphorylated.

Its subcellular location is the membrane. It catalyses the reaction ATP + protein L-histidine = ADP + protein N-phospho-L-histidine.. In Enterococcus gallinarum, this protein is Sensor protein VanSC.